Reading from the N-terminus, the 493-residue chain is Sorting nexin-4 (493 aa).

Residues 1 to 77 (MAVIDQDNFS…ILDCTVSDPH (77 aa)) form a disordered region. Residues 7 to 28 (DNFSNISWHSEQNAESAASTAQ) show a composition bias toward polar residues. The segment covering 56-65 (MEHDELDHSG) has biased composition (basic and acidic residues). Residues 68-190 (ILDCTVSDPH…AFLESPDWNA (123 aa)) form the PX domain. Residues Arg111, Thr113, Lys137, and Arg156 each coordinate a 1,2-diacyl-sn-glycero-3-phospho-(1D-myo-inositol-3-phosphate). 3 coiled-coil regions span residues 248–292 (EIKE…QKLI), 338–363 (SGTLKNLLKAREQKQLDYEQLTEYLN), and 405–442 (EQARRDRQRKLELRIEELTREVEVARNESESFAEQVSR).

Belongs to the sorting nexin family.

It localises to the cytoplasm. It is found in the membrane. Its subcellular location is the endosome membrane. Functionally, sorting nexin, involved in the separation or division of vacuoles throughout the entire life cycle of the cells. Involved in retrieval of late-Golgi SNAREs from post-Golgi endosomes to the trans-Golgi network, for cytoplasm to vacuole transport (Cvt), and autophagy of large cargos including mitophagy, pexophagy and glycophagy. This is Sorting nexin-4 (vsp-5) from Neurospora crassa (strain ATCC 24698 / 74-OR23-1A / CBS 708.71 / DSM 1257 / FGSC 987).